Consider the following 246-residue polypeptide: Orotidine 5'-phosphate decarboxylase (246 aa).

Residues Asp22, Lys44, 71 to 80 (DLKFHDIPNT), Thr131, Arg192, Gln201, Gly221, and Arg222 each bind substrate. Lys73 (proton donor) is an active-site residue.

This sequence belongs to the OMP decarboxylase family. Type 1 subfamily. Homodimer.

It catalyses the reaction orotidine 5'-phosphate + H(+) = UMP + CO2. It functions in the pathway pyrimidine metabolism; UMP biosynthesis via de novo pathway; UMP from orotate: step 2/2. Its function is as follows. Catalyzes the decarboxylation of orotidine 5'-monophosphate (OMP) to uridine 5'-monophosphate (UMP). The chain is Orotidine 5'-phosphate decarboxylase from Enterobacter sp. (strain 638).